A 177-amino-acid chain; its full sequence is Peptide methionine sulfoxide reductase MsrA (177 aa).

Residue Cys-12 is part of the active site.

It belongs to the MsrA Met sulfoxide reductase family.

It carries out the reaction L-methionyl-[protein] + [thioredoxin]-disulfide + H2O = L-methionyl-(S)-S-oxide-[protein] + [thioredoxin]-dithiol. It catalyses the reaction [thioredoxin]-disulfide + L-methionine + H2O = L-methionine (S)-S-oxide + [thioredoxin]-dithiol. Its function is as follows. Has an important function as a repair enzyme for proteins that have been inactivated by oxidation. Catalyzes the reversible oxidation-reduction of methionine sulfoxide in proteins to methionine. The protein is Peptide methionine sulfoxide reductase MsrA of Halobacterium salinarum (strain ATCC 29341 / DSM 671 / R1).